The sequence spans 693 residues: Elongation factor G (693 aa).

One can recognise a tr-type G domain in the interval E8–L282. GTP-binding positions include A17–T24, D81–H85, and N135–D138.

Belongs to the TRAFAC class translation factor GTPase superfamily. Classic translation factor GTPase family. EF-G/EF-2 subfamily.

It is found in the cytoplasm. Catalyzes the GTP-dependent ribosomal translocation step during translation elongation. During this step, the ribosome changes from the pre-translocational (PRE) to the post-translocational (POST) state as the newly formed A-site-bound peptidyl-tRNA and P-site-bound deacylated tRNA move to the P and E sites, respectively. Catalyzes the coordinated movement of the two tRNA molecules, the mRNA and conformational changes in the ribosome. The chain is Elongation factor G from Streptococcus pneumoniae (strain P1031).